A 202-amino-acid polypeptide reads, in one-letter code: MVNYPHNPICQKVTPLQKQQKHRQVDFANRGMSFEAAINATNAYYLAKGIAVIHKKPTPIQIVKVDYPRRSRAKIVEAYFKQASTTDYSGIYKGHYIDFEAKETRQKTAMPMKNFHAHQIEHMAAVLKQKGICFVLLHFATLKETYYLPAKALIDFYQIDRGNKSMPLDYIRKNGFEVKLGAFPQVPYLDIIEQKFLGGDYN.

Residues Thr-85, Asp-87, Glu-100, and Gln-119 each contribute to the Mg(2+) site.

Belongs to the RecU family. Requires Mg(2+) as cofactor.

The protein resides in the cytoplasm. It carries out the reaction Endonucleolytic cleavage at a junction such as a reciprocal single-stranded crossover between two homologous DNA duplexes (Holliday junction).. Its function is as follows. Endonuclease that resolves Holliday junction intermediates in genetic recombination. Cleaves mobile four-strand junctions by introducing symmetrical nicks in paired strands. Promotes annealing of linear ssDNA with homologous dsDNA. Required for DNA repair, homologous recombination and chromosome segregation. This is Holliday junction resolvase RecU from Streptococcus equi subsp. zooepidemicus (strain H70).